The primary structure comprises 677 residues: DNA ligase (677 aa).

NAD(+) contacts are provided by residues 35-39 (DAEYD), 84-85 (SL), and E116. Residue K118 is the N6-AMP-lysine intermediate of the active site. Residues R139, E176, K295, and K319 each coordinate NAD(+). Residues C413, C416, C431, and C437 each contribute to the Zn(2+) site. In terms of domain architecture, BRCT spans 596 to 677 (LDELPLAGQV…MLAMFADLEG (82 aa)).

The protein belongs to the NAD-dependent DNA ligase family. LigA subfamily. It depends on Mg(2+) as a cofactor. Mn(2+) is required as a cofactor.

It catalyses the reaction NAD(+) + (deoxyribonucleotide)n-3'-hydroxyl + 5'-phospho-(deoxyribonucleotide)m = (deoxyribonucleotide)n+m + AMP + beta-nicotinamide D-nucleotide.. In terms of biological role, DNA ligase that catalyzes the formation of phosphodiester linkages between 5'-phosphoryl and 3'-hydroxyl groups in double-stranded DNA using NAD as a coenzyme and as the energy source for the reaction. It is essential for DNA replication and repair of damaged DNA. The chain is DNA ligase from Pseudoalteromonas atlantica (strain T6c / ATCC BAA-1087).